Consider the following 427-residue polypeptide: 3-phosphoshikimate 1-carboxyvinyltransferase (427 aa).

Residues lysine 20, serine 21, and arginine 25 each contribute to the 3-phosphoshikimate site. A phosphoenolpyruvate-binding site is contributed by lysine 20. Phosphoenolpyruvate-binding residues include glycine 92 and arginine 120. 3-phosphoshikimate contacts are provided by serine 166, glutamine 168, aspartate 312, and lysine 339. Glutamine 168 contacts phosphoenolpyruvate. Aspartate 312 (proton acceptor) is an active-site residue. Residues arginine 343 and arginine 385 each coordinate phosphoenolpyruvate.

This sequence belongs to the EPSP synthase family. As to quaternary structure, monomer.

It localises to the cytoplasm. It carries out the reaction 3-phosphoshikimate + phosphoenolpyruvate = 5-O-(1-carboxyvinyl)-3-phosphoshikimate + phosphate. It participates in metabolic intermediate biosynthesis; chorismate biosynthesis; chorismate from D-erythrose 4-phosphate and phosphoenolpyruvate: step 6/7. In terms of biological role, catalyzes the transfer of the enolpyruvyl moiety of phosphoenolpyruvate (PEP) to the 5-hydroxyl of shikimate-3-phosphate (S3P) to produce enolpyruvyl shikimate-3-phosphate and inorganic phosphate. The polypeptide is 3-phosphoshikimate 1-carboxyvinyltransferase (Streptococcus pyogenes serotype M49 (strain NZ131)).